The chain runs to 110 residues: Coiled-coil-helix-coiled-coil-helix domain-containing protein 5 (110 aa).

Position 1 is an N-acetylmethionine (M1). CHCH domains are found at residues 9-52 (ARYC…PIIR) and 55-97 (RQAC…QPPS). 4 short sequence motifs (cx9C motif) span residues 12–22 (CSRELDQYGQC), 34–44 (CHHLKMSIARC), 58–68 (CAEPFEAFEKC), and 79–89 (CAEHMRRFLQC). 4 disulfide bridges follow: C12-C44, C22-C34, C58-C89, and C68-C79.

As to quaternary structure, monomer.

The protein localises to the mitochondrion intermembrane space. This chain is Coiled-coil-helix-coiled-coil-helix domain-containing protein 5 (Chchd5), found in Mus musculus (Mouse).